The following is a 471-amino-acid chain: Arginine biosynthesis bifunctional protein ArgJ, mitochondrial (471 aa).

Threonine 190, lysine 216, threonine 239, glutamate 327, asparagine 466, and serine 471 together coordinate substrate. Threonine 239 functions as the Nucleophile in the catalytic mechanism.

The protein belongs to the ArgJ family. Heterodimer of an alpha and a beta chain. In terms of processing, the alpha and beta chains are autoproteolytically processed from a single precursor protein within the mitochondrion.

It localises to the mitochondrion matrix. It catalyses the reaction N(2)-acetyl-L-ornithine + L-glutamate = N-acetyl-L-glutamate + L-ornithine. The enzyme catalyses L-glutamate + acetyl-CoA = N-acetyl-L-glutamate + CoA + H(+). It participates in amino-acid biosynthesis; L-arginine biosynthesis; L-ornithine and N-acetyl-L-glutamate from L-glutamate and N(2)-acetyl-L-ornithine (cyclic): step 1/1. The protein operates within amino-acid biosynthesis; L-arginine biosynthesis; N(2)-acetyl-L-ornithine from L-glutamate: step 1/4. Functionally, catalyzes two activities which are involved in the cyclic version of arginine biosynthesis: the synthesis of acetylglutamate from glutamate and acetyl-CoA, and of ornithine by transacetylation between acetylornithine and glutamate. The polypeptide is Arginine biosynthesis bifunctional protein ArgJ, mitochondrial (Coprinopsis cinerea (strain Okayama-7 / 130 / ATCC MYA-4618 / FGSC 9003) (Inky cap fungus)).